We begin with the raw amino-acid sequence, 336 residues long: MSPPVATESMYKPTTIGTEAHDQALAAMKSNQAAPAKPVFKPEPAVNLEPIKFAPIKEHQVQRAMVRRYFQDMEERAISDVIIVGAGSAGLSCAYALGKARPDLKITILESNVAPGGGCWLGGQLMSAMVCRKPADKFLDEVGVPYEDEGNFVVVKHAALFTSTVLSKVLAMPNVKMFNATACEDLIIKPCPINPGVQRVAGCVTNWTLVSLNHDHQSCMDPSTITAPLVCSFAGHDGPFGAFCVKRIASAGLSEGLGDMRPLDMERAEDHIANKTREIVPGLIVGGMELSEFDGSARMGPTFGAMLLSGKRAAEVALQSLGRVKVEEGEVVGSAK.

Substrate-binding positions include Ala-89, 110 to 111 (ES), Gly-118, and Cys-183. Cys-219 carries the post-translational modification 2,3-didehydroalanine (Cys). Substrate is bound by residues Asp-221, His-236, Met-288, and 298-300 (RMG).

It belongs to the THI4 family. Homooctamer. Fe cation serves as cofactor. In terms of processing, during the catalytic reaction, a sulfide is transferred from Cys-219 to a reaction intermediate, generating a dehydroalanine residue.

The protein localises to the cytoplasm. It is found in the nucleus. The catalysed reaction is [ADP-thiazole synthase]-L-cysteine + glycine + NAD(+) = [ADP-thiazole synthase]-dehydroalanine + ADP-5-ethyl-4-methylthiazole-2-carboxylate + nicotinamide + 3 H2O + 2 H(+). Its function is as follows. Involved in biosynthesis of the thiamine precursor thiazole. Catalyzes the conversion of NAD and glycine to adenosine diphosphate 5-(2-hydroxyethyl)-4-methylthiazole-2-carboxylic acid (ADT), an adenylated thiazole intermediate. The reaction includes an iron-dependent sulfide transfer from a conserved cysteine residue of the protein to a thiazole intermediate. The enzyme can only undergo a single turnover, which suggests it is a suicide enzyme. May have additional roles in adaptation to various stress conditions and in DNA damage tolerance. In Puccinia graminis f. sp. tritici (strain CRL 75-36-700-3 / race SCCL) (Black stem rust fungus), this protein is Thiamine thiazole synthase.